The following is a 291-amino-acid chain: Protease HtpX (291 aa).

The next 2 membrane-spanning stretches (helical) occupy residues 4–24 (ILLF…TLKL) and 36–56 (GSLL…SLFI). A Zn(2+)-binding site is contributed by H142. E143 is a catalytic residue. H146 serves as a coordination point for Zn(2+). 2 helical membrane passes run 150–170 (GDMV…MFFA) and 193–213 (FVAT…IVMW). Zn(2+) is bound at residue E219.

Belongs to the peptidase M48B family. Requires Zn(2+) as cofactor.

The protein localises to the cell inner membrane. This Pseudomonas aeruginosa (strain LESB58) protein is Protease HtpX.